The chain runs to 156 residues: Transcription antitermination protein NusB (156 aa).

This sequence belongs to the NusB family.

Functionally, involved in transcription antitermination. Required for transcription of ribosomal RNA (rRNA) genes. Binds specifically to the boxA antiterminator sequence of the ribosomal RNA (rrn) operons. This Rickettsia africae (strain ESF-5) protein is Transcription antitermination protein NusB.